Consider the following 352-residue polypeptide: Alanine racemase (352 aa).

The active-site Proton acceptor; specific for D-alanine is lysine 33. Lysine 33 is modified (N6-(pyridoxal phosphate)lysine). Arginine 129 contributes to the substrate binding site. Catalysis depends on tyrosine 250, which acts as the Proton acceptor; specific for L-alanine. Methionine 298 lines the substrate pocket.

The protein belongs to the alanine racemase family. The cofactor is pyridoxal 5'-phosphate.

The catalysed reaction is L-alanine = D-alanine. The protein operates within amino-acid biosynthesis; D-alanine biosynthesis; D-alanine from L-alanine: step 1/1. Catalyzes the interconversion of L-alanine and D-alanine. May also act on other amino acids. In Neisseria gonorrhoeae (strain ATCC 700825 / FA 1090), this protein is Alanine racemase (alr).